A 330-amino-acid chain; its full sequence is Aquaporin-3 (330 aa).

Residues 1–40 (MSATPIIHLRDVKKRTGVLNAWERVRNKPQVHWAMECFAE) are Cytoplasmic-facing. Residues 41–61 (ALGVFFYVYFGLGSTAAWVIG) traverse the membrane as a helical segment. The Extracellular segment spans residues 62 to 71 (NILKQSGLSS). A helical membrane pass occupies residues 72 to 92 (VFQIGFAYAFGILFAIGVCAA). Over 93–124 (TSGGHFNPCVTIAFTIFRGFPPLKAVRYIVAQ) the chain is Cytoplasmic. Residues 99-101 (NPC) carry the NPA 1 motif. Residues 125 to 145 (ILGAYIASALVYNQWKVLIVE) form a helical membrane-spanning segment. Topologically, residues 146–157 (SELLLKQAGVYE) are extracellular. A helical transmembrane segment spans residues 158–178 (TTMFTPNGPAGIFALYLLPGA). Residues 179 to 183 (QTLPR) are Cytoplasmic-facing. The chain crosses the membrane as a helical span at residues 184 to 204 (AFLNEFVNCFVLALVIWAALD). Over 205 to 207 (PTS) the chain is Extracellular. Residues 208–228 (FMIPPVMAPFIIAAAYAGSIW) form a helical membrane-spanning segment. The Cytoplasmic segment spans residues 229–264 (GYAVPAISLNSARDIGCRLFALTIWGKSAAGGSYSA). Positions 238–240 (NSA) match the NPA 2 motif. The chain crosses the membrane as a helical span at residues 265-285 (IAALVNIPATLLAAVVYELFL). At 286–330 (VDSDRVVAGSHLEFMNVAANHRRHRQQAEDDNLVEADDSSQEKPV) the chain is on the extracellular side. Residues 308–330 (RHRQQAEDDNLVEADDSSQEKPV) are disordered. Residues 314–324 (EDDNLVEADDS) are compositionally biased toward acidic residues.

This sequence belongs to the MIP/aquaporin (TC 1.A.8) family.

Its subcellular location is the cell membrane. The enzyme catalyses H2O(in) = H2O(out). It catalyses the reaction CO2(out) = CO2(in). Water channel required to facilitate the transport of water across membranes. Also mediates the transport of carbon dioxide across the membrane. In Laccaria bicolor (Bicoloured deceiver), this protein is Aquaporin-3.